Here is a 197-residue protein sequence, read N- to C-terminus: ADP-ribosylation factor-like protein 6-interacting protein 1 (197 aa).

4 helical membrane-spanning segments follow: residues 43-63 (VVFG…LSLI), 64-84 (TLLS…PMVS), 129-149 (TVFV…GAII), and 150-170 (NNLL…GLQN).

Belongs to the ARL6ip family.

Its subcellular location is the membrane. The sequence is that of ADP-ribosylation factor-like protein 6-interacting protein 1 from Drosophila melanogaster (Fruit fly).